A 189-amino-acid polypeptide reads, in one-letter code: UPF0494 membrane protein C977.06 (189 aa).

3 helical membrane-spanning segments follow: residues 78-98 (WPLLIIWCILIVFAIDKNFEV), 120-140 (IWGPIAIYICLFVLLLLGLIY), and 148-168 (AIPLISIVIAAVVVIIAVAMV).

It belongs to the UPF0494 family.

It is found in the membrane. The chain is UPF0494 membrane protein C977.06 from Schizosaccharomyces pombe (strain 972 / ATCC 24843) (Fission yeast).